The chain runs to 472 residues: Tryptophanase (472 aa).

Lys-270 carries the N6-(pyridoxal phosphate)lysine modification.

Belongs to the beta-eliminating lyase family. Homotetramer. The cofactor is pyridoxal 5'-phosphate.

It catalyses the reaction L-tryptophan + H2O = indole + pyruvate + NH4(+). The protein operates within amino-acid degradation; L-tryptophan degradation via pyruvate pathway; indole and pyruvate from L-tryptophan: step 1/1. This is Tryptophanase (tnaA) from Haemophilus influenzae.